We begin with the raw amino-acid sequence, 117 residues long: Replication initiation control protein YabA (117 aa).

The segment at 45–81 (NQHLRERLDQSDRDKSSETENDSAQKPGHSDIGEGHD) is disordered. Basic and acidic residues-rich tracts occupy residues 46 to 62 (QHLR…KSSE) and 72 to 81 (GHSDIGEGHD). Residues histidine 92, cysteine 94, cysteine 107, and cysteine 110 each contribute to the Zn(2+) site.

Belongs to the YabA family. Homotetramer. Interacts with both DnaA and DnaN, acting as a bridge between these two proteins. It depends on Zn(2+) as a cofactor.

The protein resides in the cytoplasm. Its subcellular location is the nucleoid. Its function is as follows. Involved in control of chromosome replication initiation. Inhibits the cooperative binding of DnaA to the oriC region, thus negatively regulating initiation of chromosome replication. Inhibits the ability of DnaA-ATP to form a helix on DNA; does not disassemble preformed DnaA-DNA helices. Decreases the residence time of DnaA on the chromosome at its binding sites (oriC, replication forks and promoter-binding sites). Tethers DnaA to the replication machinery via the DNA polymerase beta sliding clamp subunit (dnaN). Associates with oriC and other DnaA targets on the chromosome in a DnaA-dependent manner. The protein is Replication initiation control protein YabA of Bacillus pumilus (strain SAFR-032).